The following is a 231-amino-acid chain: Uridylate kinase (231 aa).

6-9 contacts ATP; sequence KLSG. The segment at 14–19 is involved in allosteric activation by GTP; sequence GEGGRG. G49 and R53 together coordinate ATP. Residues D66 and 127–134 contribute to the UMP site; that span reads TSNPFFTT. ATP-binding residues include T154, Y160, and D163.

This sequence belongs to the UMP kinase family. As to quaternary structure, homohexamer.

It localises to the cytoplasm. The catalysed reaction is UMP + ATP = UDP + ADP. It functions in the pathway pyrimidine metabolism; CTP biosynthesis via de novo pathway; UDP from UMP (UMPK route): step 1/1. With respect to regulation, allosterically activated by GTP. Inhibited by UTP. Catalyzes the reversible phosphorylation of UMP to UDP. This Thermotoga maritima (strain ATCC 43589 / DSM 3109 / JCM 10099 / NBRC 100826 / MSB8) protein is Uridylate kinase.